Here is a 168-residue protein sequence, read N- to C-terminus: Ubiquitin-fold modifier-conjugating enzyme 1 (168 aa).

Catalysis depends on Cys-119, which acts as the Glycyl thioester intermediate.

Belongs to the ubiquitin-conjugating enzyme family. UFC1 subfamily.

Its function is as follows. E2-like enzyme which forms an intermediate with UFM1 via a thioester linkage. The chain is Ubiquitin-fold modifier-conjugating enzyme 1 from Drosophila grimshawi (Hawaiian fruit fly).